A 747-amino-acid chain; its full sequence is Anoctamin-9 (747 aa).

The Cytoplasmic segment spans residues 1–193 (MQDDESSQIF…LYFTWLGWYT (193 aa)). The chain crosses the membrane as a helical span at residues 194-214 (YMLVPAAVVGLIVFLSGFALF). Over 215-259 (DSSQISKEICSANDIFMCPLGDHSHRYLRLSEMCTFAKLTHLFDN) the chain is Extracellular. Ser245 is subject to Phosphoserine; by PKA. Residues 260 to 280 (EGTVLFAIFMALWATVFLEIW) form a helical membrane-spanning segment. The Cytoplasmic segment spans residues 281 to 326 (KRKRAHEVQSWKLYEWDEEEEEMALELINSPHYKLKDHRHSYLSST). Residues 327 to 347 (IILILSLFMICLMIGMAHVLV) form a helical membrane-spanning segment. The Extracellular portion of the chain corresponds to 348 to 364 (VYRVLAGALFSSLVKQQ). The helical transmembrane segment at 365-385 (VTTAVVVTGAVVHYIIIVIMT) threads the bilayer. The Cytoplasmic segment spans residues 386–414 (KVNKYVALKLCKFEESGTFSEQERKFTVK). Residues 415-435 (FFILQFFAHFSSLIYIAFILG) traverse the membrane as a helical segment. Residues 436–543 (RINGHPGKST…EMMIQYGFTT (108 aa)) are Extracellular-facing. Residues 544 to 564 (IFVAAFPLAPLLALFSNLVEI) traverse the membrane as a helical segment. At 565–595 (RLDAIKMVRLQRRLVPRKAKDIGTWLQVLET) the chain is on the cytoplasmic side. Residues 596 to 616 (IGVLAVIANGMVIAFTSEFIP) form a helical membrane-spanning segment. Over 617–695 (RVVYKYHYGP…FWFILAIRLT (79 aa)) the chain is Extracellular. Asn630, Asn643, Asn665, and Asn681 each carry an N-linked (GlcNAc...) asparagine glycan. Residues 696 to 716 (FVILFEHFALCIKLIAAWFVP) form a helical membrane-spanning segment. The Cytoplasmic segment spans residues 717-747 (DVPQKVKNEVLQEKYDRIRHRMRFSSRSTDV).

Belongs to the anoctamin family. In terms of processing, phosphorylation on Ser-245 by cAMP-dependent protein kinase A (PKA)is essential for activation of its cation channel activity. As to expression, highly expressed in the olfactory epithelium, particularly in mature olfactory sensory neurons (at protein level). Expressed in the kidney (at protein level). Predominant expression seen in epithelial tissues. Highly expressed in the small intestine, colon and stomach.

The protein localises to the cell membrane. It is found in the endoplasmic reticulum. It carries out the reaction a 1,2-diacyl-sn-glycero-3-phospho-L-serine(in) = a 1,2-diacyl-sn-glycero-3-phospho-L-serine(out). It catalyses the reaction a beta-D-galactosyl-(1&lt;-&gt;1')-N-acylsphing-4-enine(out) = a beta-D-galactosyl-(1&lt;-&gt;1')-N-acylsphing-4-enine(in). The catalysed reaction is a 1,2-diacyl-sn-glycero-3-phosphocholine(in) = a 1,2-diacyl-sn-glycero-3-phosphocholine(out). The enzyme catalyses Ca(2+)(in) = Ca(2+)(out). It carries out the reaction Na(+)(in) = Na(+)(out). It catalyses the reaction K(+)(in) = K(+)(out). With respect to regulation, cation channel activity is activated via phosphorylation on Ser-245 by cAMP-dependent protein kinase A (PKA). Inhibited by NaCl. In terms of biological role, PKA-activated nonselective cation channel. Discriminates poorly among cations but is more permeable to Ca(2+) ions than to monovalent cations. Acts as a calcium-activated calcium permeable channel which may operate as a endoplasmic reticulum (ER) Ca(2+)-leak channel, reducing the loading of the ER Ca(2+) store. Regulates intracellular Ca2+ signals, ion channel activity, and cytokine release in the renal tissue. Plays an important role in olfaction, amplifying cAMP-evoked cyclic nucleotide-gated (CNG) channel currents in the olfactory sensory neurons. Has calcium-dependent phospholipid scramblase activity; scrambles phosphatidylserine, phosphatidylcholine and galactosylceramide. Does not exhibit calcium-activated chloride channel (CaCC) activity. Can inhibit the activity of ANO1. The sequence is that of Anoctamin-9 from Mus musculus (Mouse).